A 581-amino-acid polypeptide reads, in one-letter code: MKENAASRVVFILLLFLSVSLLNGQSPPEKPKLVKCRSPGKETFTCWWEPGADGGLPTNYTLTYHKEGETLIHECPDYKTGGPNSCYFSKKHTSIWKMYVITVNAINQMGISSSDPLYVHVTYIVEPEPPANLTLELKHPEDRKPYLWIKWSPPTMTDVKSGWFIIQYEIRLKPEKATDWETHFTLKQTQLKIFNLYPGQKYLVQIRCKPDHGYWSEWSPESSIQIPNDFPVKDTSMWIFVAILSAVICLIMVWAVALKGYSMVTCILPPVPGPKIKGFDVHLLEKGKSEELLRALESQDFPPTSDCEDLLMEFIEVDDCEDQQLMPRPSKEHTEQGVKPMHLDLDSDSGRGSCDSPSLLSEKCDEPQAHPSKFHTPEGPEKLENPETNLTCLQAPQSTSVEGKIPYFLANGPKSSTWPFPQPPSLYSPRYSYHNIADVCELALGMAGTTATSLDQTDQHALKASKTIETGREGKATKQRESEGCSSKPDQDTVWPRPQDKTPLISAKPLEYVEIHKVSQDGVLALFPKQNEKFGAPEASKEYSKVSRVTDSNILVLVPDPQAQNLTLLEEPAKKAPPALP.

The first 24 residues, 1 to 24 (MKENAASRVVFILLLFLSVSLLNG), serve as a signal peptide directing secretion. At 25–237 (QSPPEKPKLV…NDFPVKDTSM (213 aa)) the chain is on the extracellular side. Fibronectin type-III domains are found at residues 27-127 (PPEK…IVEP) and 129-229 (PPAN…IPND). A disulfide bond links C36 and C46. N59 carries an N-linked (GlcNAc...) asparagine glycan. Cysteines 75 and 86 form a disulfide. N132 carries N-linked (GlcNAc...) asparagine glycosylation. Residues D211 and H212 each coordinate Zn(2+). A WSXWS motif motif is present at residues 215 to 219 (WSEWS). Residues 238–258 (WIFVAILSAVICLIMVWAVAL) form a helical membrane-spanning segment. Residues 259–581 (KGYSMVTCIL…PAKKAPPALP (323 aa)) lie on the Cytoplasmic side of the membrane. Residues 267-275 (ILPPVPGPK) carry the Box 1 motif motif. Disordered regions lie at residues 324–384 (QLMP…EKLE) and 458–499 (DQHA…PRPQ). Composition is skewed to basic and acidic residues over residues 329 to 349 (PSKE…DSDS), 375 to 384 (HTPEGPEKLE), and 469 to 483 (ETGR…RESE).

This sequence belongs to the type I cytokine receptor family. Type 1 subfamily. In terms of assembly, interacts with SMARCA1. Interacts with NEK3 and VAV2 and this interaction is prolactin-dependent. Expressed in all tissues examined; liver, peripheral blood lymphocytes, endometrium, corpus luteum, intestine, fetal thymus, fetal spleen, fetal liver and fetal brain.

The protein localises to the membrane. Its function is as follows. This is a receptor for the anterior pituitary hormone prolactin. In Bos taurus (Bovine), this protein is Prolactin receptor (PRLR).